Here is a 731-residue protein sequence, read N- to C-terminus: Fatty acid oxidation complex subunit alpha (731 aa).

The tract at residues 15 to 204 is enoyl-CoA hydratase; it reads TEKTSAFSLT…RQGLVDEAVP (190 aa). The interval 320 to 729 is 3-hydroxyacyl-CoA dehydrogenase; sequence KPIHRVGILG…FYPPADKDNS (410 aa).

It in the N-terminal section; belongs to the enoyl-CoA hydratase/isomerase family. This sequence in the central section; belongs to the 3-hydroxyacyl-CoA dehydrogenase family. Heterotetramer of two alpha chains (FadJ) and two beta chains (FadI).

The protein localises to the cytoplasm. It catalyses the reaction a (3S)-3-hydroxyacyl-CoA = a (2E)-enoyl-CoA + H2O. It carries out the reaction a 4-saturated-(3S)-3-hydroxyacyl-CoA = a (3E)-enoyl-CoA + H2O. The catalysed reaction is a (3S)-3-hydroxyacyl-CoA + NAD(+) = a 3-oxoacyl-CoA + NADH + H(+). The enzyme catalyses (3S)-3-hydroxybutanoyl-CoA = (3R)-3-hydroxybutanoyl-CoA. It participates in lipid metabolism; fatty acid beta-oxidation. Catalyzes the formation of a hydroxyacyl-CoA by addition of water on enoyl-CoA. Also exhibits 3-hydroxyacyl-CoA epimerase and 3-hydroxyacyl-CoA dehydrogenase activities. This Pectobacterium atrosepticum (strain SCRI 1043 / ATCC BAA-672) (Erwinia carotovora subsp. atroseptica) protein is Fatty acid oxidation complex subunit alpha.